The primary structure comprises 465 residues: Argininosuccinate lyase (465 aa).

This sequence belongs to the lyase 1 family. Argininosuccinate lyase subfamily.

It is found in the cytoplasm. The enzyme catalyses 2-(N(omega)-L-arginino)succinate = fumarate + L-arginine. The protein operates within amino-acid biosynthesis; L-arginine biosynthesis; L-arginine from L-ornithine and carbamoyl phosphate: step 3/3. The polypeptide is Argininosuccinate lyase (Variovorax paradoxus (strain S110)).